The following is a 255-amino-acid chain: Wtf element wtf15 (255 aa).

Residues 19–78 are disordered; sequence KAGHEIDLEGSPPSEHNSEEKSTLPSNSDILTSANPVSQASETPDHSIESNTGSTQSPTS. Composition is skewed to polar residues over residues 41-60 and 67-78; these read TLPSNSDILTSANPVSQASE and ESNTGSTQSPTS. The next 4 membrane-spanning stretches (helical) occupy residues 85-105, 112-132, 162-182, and 187-208; these read FSFCIVYYSYFAIVVLGCVLP, FLIAFLVIFGIISVILFSGSI, FLKTFVFYGLLKTIEHFLVLL, and WGWKCSTLSSILTPVSCISFCL.

Belongs to the WTF family.

The protein resides in the spore membrane. Functionally, may act in meiotic drive. The sequence is that of Wtf element wtf15 from Schizosaccharomyces pombe (strain 972 / ATCC 24843) (Fission yeast).